The following is a 464-amino-acid chain: Argininosuccinate lyase (464 aa).

It belongs to the lyase 1 family. Argininosuccinate lyase subfamily.

It is found in the cytoplasm. The catalysed reaction is 2-(N(omega)-L-arginino)succinate = fumarate + L-arginine. The protein operates within amino-acid biosynthesis; L-arginine biosynthesis; L-arginine from L-ornithine and carbamoyl phosphate: step 3/3. This chain is Argininosuccinate lyase, found in Pseudomonas entomophila (strain L48).